The following is a 465-amino-acid chain: Ribosomal oxygenase 2 (465 aa).

The JmjC domain occupies 139-271 (QPQRYKDELW…NSWGDCLLDS (133 aa)). H179, D181, and H240 together coordinate Fe cation. Position 309 is a phosphoserine (S309).

Belongs to the ROX family. MINA53 subfamily. It depends on Fe(2+) as a cofactor. Predominantly expressed in testis. Expressed at high levels in spleen, thymus, and colon, but barely detectable in brain, skeletal muscle, and seminal vesicle (at protein level).

Its subcellular location is the nucleus. It localises to the nucleolus. It catalyses the reaction L-histidyl-[ribosomal protein uL15] + 2-oxoglutarate + O2 = (3S)-3-hydroxy-L-histidyl-[ribosomal protein uL15] + succinate + CO2. It carries out the reaction L-histidyl-[protein] + 2-oxoglutarate + O2 = (3S)-3-hydroxy-L-histidyl-[protein] + succinate + CO2. In terms of biological role, oxygenase that can act as both a histone lysine demethylase and a ribosomal histidine hydroxylase. Is involved in the demethylation of trimethylated 'Lys-9' on histone H3 (H3K9me3), leading to an increase in ribosomal RNA expression. Also catalyzes the hydroxylation of 60S ribosomal protein L27a on 'His-39'. May play an important role in cell growth and survival. May be involved in ribosome biogenesis, most likely during the assembly process of pre-ribosomal particles. The sequence is that of Ribosomal oxygenase 2 from Mus musculus (Mouse).